The following is a 150-amino-acid chain: Large ribosomal subunit protein bL9 (150 aa).

Belongs to the bacterial ribosomal protein bL9 family.

Binds to the 23S rRNA. This is Large ribosomal subunit protein bL9 from Janthinobacterium sp. (strain Marseille) (Minibacterium massiliensis).